The sequence spans 131 residues: Peptide methionine sulfoxide reductase MsrB (131 aa).

Residues 8 to 130 form the MsrB domain; it reads LDEWRSMLDP…NSVCIDLRPR (123 aa). Zn(2+)-binding residues include cysteine 47, cysteine 50, cysteine 96, and cysteine 99. Catalysis depends on cysteine 119, which acts as the Nucleophile.

This sequence belongs to the MsrB Met sulfoxide reductase family. Zn(2+) serves as cofactor.

It catalyses the reaction L-methionyl-[protein] + [thioredoxin]-disulfide + H2O = L-methionyl-(R)-S-oxide-[protein] + [thioredoxin]-dithiol. This is Peptide methionine sulfoxide reductase MsrB from Pseudomonas putida (strain GB-1).